The sequence spans 177 residues: Large ribosomal subunit protein uL6 (177 aa).

It belongs to the universal ribosomal protein uL6 family. Part of the 50S ribosomal subunit.

In terms of biological role, this protein binds to the 23S rRNA, and is important in its secondary structure. It is located near the subunit interface in the base of the L7/L12 stalk, and near the tRNA binding site of the peptidyltransferase center. The sequence is that of Large ribosomal subunit protein uL6 from Bordetella bronchiseptica (strain ATCC BAA-588 / NCTC 13252 / RB50) (Alcaligenes bronchisepticus).